Here is a 126-residue protein sequence, read N- to C-terminus: Heterotrimeric G protein gamma subunit GPG1 (126 aa).

As to quaternary structure, g proteins are composed of 3 units, alpha, beta and gamma. GPG1 interacts with the beta subunits GBP1 and GPB2.

Its subcellular location is the cytoplasm. Its function is as follows. Gamma subunit of a guanine nucleotide-binding protein (G protein). G proteins are involved as modulators or transducers in various transmembrane signaling systems. The beta and gamma chains are required for the GTPase activity, for replacement of GDP by GTP, and for G protein-effector interaction. Involved in the determination of the cAMP level according to nutritional conditions, most probably as a regulator of cAMP phosphodiesterase. Required for the control of pseudohyphal and haploid invasive growth. This Saccharomyces cerevisiae (strain ATCC 204508 / S288c) (Baker's yeast) protein is Heterotrimeric G protein gamma subunit GPG1 (GPG1).